Reading from the N-terminus, the 151-residue chain is Transcriptional regulator MraZ (151 aa).

SpoVT-AbrB domains are found at residues 5-52 and 81-124; these read ANAI…PLDE and AVDL…DEDA.

This sequence belongs to the MraZ family. Forms oligomers.

It localises to the cytoplasm. The protein resides in the nucleoid. This is Transcriptional regulator MraZ from Pseudomonas fluorescens (strain ATCC BAA-477 / NRRL B-23932 / Pf-5).